A 129-amino-acid chain; its full sequence is Small ribosomal subunit protein uS11 (129 aa).

It belongs to the universal ribosomal protein uS11 family. In terms of assembly, part of the 30S ribosomal subunit. Interacts with proteins S7 and S18. Binds to IF-3.

Its function is as follows. Located on the platform of the 30S subunit, it bridges several disparate RNA helices of the 16S rRNA. Forms part of the Shine-Dalgarno cleft in the 70S ribosome. This Methylobacterium radiotolerans (strain ATCC 27329 / DSM 1819 / JCM 2831 / NBRC 15690 / NCIMB 10815 / 0-1) protein is Small ribosomal subunit protein uS11.